A 128-amino-acid polypeptide reads, in one-letter code: Glycine cleavage system H protein (128 aa).

A Lipoyl-binding domain is found at 22–104 (VATVGITEHA…YGEGWIFKMK (83 aa)). The residue at position 63 (Lys-63) is an N6-lipoyllysine.

This sequence belongs to the GcvH family. In terms of assembly, the glycine cleavage system is composed of four proteins: P, T, L and H. It depends on (R)-lipoate as a cofactor.

Functionally, the glycine cleavage system catalyzes the degradation of glycine. The H protein shuttles the methylamine group of glycine from the P protein to the T protein. The polypeptide is Glycine cleavage system H protein (Methylacidiphilum infernorum (isolate V4) (Methylokorus infernorum (strain V4))).